The primary structure comprises 130 residues: Arsenate reductase 2.2 (130 aa).

A Rhodanese domain is found at 18 to 119 (RDPRIAVVDV…WELSGRPVCR (102 aa)). The active-site Cysteine persulfide intermediate is the Cys70.

The enzyme catalyses [glutaredoxin]-dithiol + arsenate + glutathione + H(+) = glutathionyl-S-S-[glutaredoxin] + arsenite + H2O. Its function is as follows. Possesses arsenate reductase activity in vitro. Catalyzes the reduction of arsenate [As(V)] to arsenite [As(III)]. May play a role in arsenic retention in roots. Possesses phosphatase activity towards p-nitrophenyl phosphate in vitro. The protein is Arsenate reductase 2.2 (ACR2.2) of Oryza sativa subsp. japonica (Rice).